Here is a 216-residue protein sequence, read N- to C-terminus: Inner membrane assembly complex subunit 22 (216 aa).

Residues Met-1–Thr-26 constitute a mitochondrion transit peptide. Topologically, residues Val-27–Thr-43 are mitochondrial matrix. Residues Met-44–Ala-63 traverse the membrane as a helical segment. Residues Glu-64–Asn-93 are a coiled coil. Residues Glu-64 to Leu-216 are Mitochondrial intermembrane-facing.

As to quaternary structure, component of the inner membrane assembly (INA) complex, composed of INA17 and INA22. Interacts with a subset of F(1)F(0)-ATP synthase subunits of the F(1)-domain and the peripheral stalk.

The protein localises to the mitochondrion inner membrane. In terms of biological role, component of the INA complex (INAC) that promotes the biogenesis of mitochondrial F(1)F(0)-ATP synthase. INAC facilitates the assembly of the peripheral stalk and promotes the assembly of the catalytic F(1)-domain with the membrane-embedded F(0)-domain. This chain is Inner membrane assembly complex subunit 22, found in Saccharomyces cerevisiae (strain ATCC 204508 / S288c) (Baker's yeast).